Reading from the N-terminus, the 723-residue chain is Polyribonucleotide nucleotidyltransferase (723 aa).

Asp488 and Asp494 together coordinate Mg(2+). The 60-residue stretch at 555-614 (PKIITLNIKPEKIKDVIGPGGKQINAIIEETGVKIDIEQDGTVYIASQDQAMNRKAIAII) folds into the KH domain. The S1 motif domain occupies 624–692 (GEVYTGKVRR…HQGRVNLSRK (69 aa)). Positions 692–723 (KALLEKKEQPEGDKKPQAEKKFYPKTKKPESK) are disordered. The segment covering 693–723 (ALLEKKEQPEGDKKPQAEKKFYPKTKKPESK) has biased composition (basic and acidic residues).

The protein belongs to the polyribonucleotide nucleotidyltransferase family. The cofactor is Mg(2+).

It is found in the cytoplasm. The enzyme catalyses RNA(n+1) + phosphate = RNA(n) + a ribonucleoside 5'-diphosphate. Its function is as follows. Involved in mRNA degradation. Catalyzes the phosphorolysis of single-stranded polyribonucleotides processively in the 3'- to 5'-direction. This chain is Polyribonucleotide nucleotidyltransferase, found in Listeria innocua serovar 6a (strain ATCC BAA-680 / CLIP 11262).